The chain runs to 286 residues: Transcription factor MYB62 (286 aa).

HTH myb-type domains are found at residues 16–68 and 69–123; these read DEEL…LNYL and KPDI…QKQA. 2 consecutive DNA-binding regions (H-T-H motif) follow at residues 44 to 68 and 96 to 119; these read WNHV…LNYL and WSKI…RTRV.

As to expression, expressed in leaves and flowers.

The protein resides in the nucleus. Transcription repressor of phosphate (Pi) starvation-induced genes. Negatively regulates Pi starvation responses via the repression of gibberellic acid (GA) biosynthesis and signaling. Modulates root architecture, phosphatase activity, and Pi uptake and accumulation. The chain is Transcription factor MYB62 from Arabidopsis thaliana (Mouse-ear cress).